Here is a 146-residue protein sequence, read N- to C-terminus: Leghemoglobin-3 (146 aa).

The 145-residue stretch at 2 to 146 (GFTDKQEALV…LATAIKKAMV (145 aa)) folds into the Globin domain. Tyr29 is modified (nitrated tyrosine). Residue Ser44 coordinates heme b. Ser44 carries the phosphoserine modification. His61 contacts O2. Heme b is bound by residues Lys64, His93, and Lys96. Tyr134 bears the Nitrated tyrosine mark.

The protein belongs to the plant globin family. Monomer. Post-translationally, nitrated in effective nodules and particularly in hypoxic conditions; this mechanism may play a protective role in the symbiosis by buffering toxic peroxynitrite NO(2)(-). Nitration level decrease during nodule senescence. In terms of processing, phosphorylation at Ser-44 disrupts the molecular environment of its porphyrin ring oxygen binding pocket, thus leading to a reduced oxygen consumption and to the delivery of oxygen O(2) to symbiosomes. Root nodules.

The protein localises to the cytoplasm. The protein resides in the cytosol. It is found in the nucleus. Leghemoglobin that reversibly binds oxygen O(2) through a pentacoordinated heme iron. In root nodules, facilitates the diffusion of oxygen to the bacteroids while preventing the bacterial nitrogenase from being inactivated by buffering dioxygen, nitric oxide and carbon monoxide, and promoting the formation of reactive oxygen species (ROS, e.g. H(2)O(2)). This role is essential for symbiotic nitrogen fixation (SNF). This chain is Leghemoglobin-3, found in Medicago sativa (Alfalfa).